The following is a 566-amino-acid chain: UvrABC system protein C (566 aa).

One can recognise a GIY-YIG domain in the interval 16–93 (EKPGVYLFKK…IQQYKPRYNV (78 aa)). The 36-residue stretch at 199–234 (AEVLPKLYEKIEEFSKELMFEKCAHIRDQIIALENL) folds into the UVR domain.

It belongs to the UvrC family. Interacts with UvrB in an incision complex.

It localises to the cytoplasm. Functionally, the UvrABC repair system catalyzes the recognition and processing of DNA lesions. UvrC both incises the 5' and 3' sides of the lesion. The N-terminal half is responsible for the 3' incision and the C-terminal half is responsible for the 5' incision. The protein is UvrABC system protein C of Aquifex aeolicus (strain VF5).